The sequence spans 330 residues: Phosphate acyltransferase (330 aa).

It belongs to the PlsX family. As to quaternary structure, homodimer. Probably interacts with PlsY.

Its subcellular location is the cytoplasm. The enzyme catalyses a fatty acyl-[ACP] + phosphate = an acyl phosphate + holo-[ACP]. Its pathway is lipid metabolism; phospholipid metabolism. Functionally, catalyzes the reversible formation of acyl-phosphate (acyl-PO(4)) from acyl-[acyl-carrier-protein] (acyl-ACP). This enzyme utilizes acyl-ACP as fatty acyl donor, but not acyl-CoA. This chain is Phosphate acyltransferase, found in Bacillus cereus (strain ATCC 14579 / DSM 31 / CCUG 7414 / JCM 2152 / NBRC 15305 / NCIMB 9373 / NCTC 2599 / NRRL B-3711).